We begin with the raw amino-acid sequence, 665 residues long: Cyclic nucleotide-gated cation channel subunit A (665 aa).

The Cytoplasmic portion of the chain corresponds to 1 to 110 (MRHFKVKAMV…DPTLQSHYRW (110 aa)). The helical transmembrane segment at 111-131 (LAIVSLAVLYNIIFVVGRAVF) threads the bilayer. At 132 to 138 (WEINKSA) the chain is on the extracellular side. N-linked (GlcNAc...) asparagine glycosylation occurs at N135. The helical transmembrane segment at 139–159 (PAFWYTLDYLCDFIYLLDTLV) threads the bilayer. Residues 160–186 (HMHEGFLDQGLLVRDAFRLRRHYFHTK) are Cytoplasmic-facing. A helical transmembrane segment spans residues 187–207 (GWYLDVLSMLPTDLAYIWWPP). The Extracellular portion of the chain corresponds to 208 to 253 (ETCSSLYLPCPVIVRLNRLLRINRLWEWFDRTETATGYPNAFRICK). The helical transmembrane segment at 254-274 (VVLAILVLIHWNACMYFAISY) threads the bilayer. The Cytoplasmic segment spans residues 275–325 (EIGFSSDSWVYNLNGTRNNTLQRQYIYSFYWSTLTLTTIGETPTPENDVEY). A helical membrane pass occupies residues 326-346 (LFVVADFLAGVLIFATIVGNI). Residues 347-481 (GSMISNMNVA…GKLSVVGDDG (135 aa)) are Extracellular-facing. Residues 437 to 559 (LLEA…DGLL), E496, and R511 contribute to the 3',5'-cyclic GMP site. The helical transmembrane segment at 482–502 (ITVLATLGAGSVFGEVSVLEI) threads the bilayer. At 503 to 665 (AGNRTGNRRT…SSDAAKQNTL (163 aa)) the chain is on the cytoplasmic side. A disordered region spans residues 633–665 (RSGRLYSLQPKRRPRSRPDATAKSSDAAKQNTL). The segment covering 654–665 (AKSSDAAKQNTL) has biased composition (polar residues).

It belongs to the cyclic nucleotide-gated cation channel (TC 1.A.1.5) family. In terms of tissue distribution, expressed in antennae and the visual system.

Its subcellular location is the membrane. Functionally, approximately 50-fold more sensitive to cGMP than to cAMP. May be involved in transduction cascades of both invertebrate photoreceptors and olfactory sensillae. The chain is Cyclic nucleotide-gated cation channel subunit A (CngA) from Drosophila melanogaster (Fruit fly).